The following is a 363-amino-acid chain: Probable endopolygalacturonase B (363 aa).

A signal peptide spans 1-20 (MQLLQSSVIAATVGAALVAA). The propeptide occupies 21–28 (VPVELEAR). Cys31 and Cys46 are joined by a disulfide. 6 PbH1 repeats span residues 158–187 (SDNL…DVGS), 188–209 (STYI…AINS), 210–230 (GSHI…SIGS), 239–260 (VEDV…RIKT), 268–290 (VSNV…IVEQ), and 302–347 (TNGI…SITG). An N-linked (GlcNAc...) asparagine glycan is attached at Asn162. Asp202 (proton donor) is an active-site residue. Cys204 and Cys220 form a disulfide bridge. His224 is a catalytic residue. 2 disulfides stabilise this stretch: Cys330/Cys335 and Cys354/Cys363.

This sequence belongs to the glycosyl hydrolase 28 family.

The protein resides in the secreted. It carries out the reaction (1,4-alpha-D-galacturonosyl)n+m + H2O = (1,4-alpha-D-galacturonosyl)n + (1,4-alpha-D-galacturonosyl)m.. Functionally, involved in maceration and soft-rotting of plant tissue. Hydrolyzes the 1,4-alpha glycosidic bonds of de-esterified pectate in the smooth region of the plant cell wall. The sequence is that of Probable endopolygalacturonase B (pgaB) from Aspergillus flavus (strain ATCC 200026 / FGSC A1120 / IAM 13836 / NRRL 3357 / JCM 12722 / SRRC 167).